A 256-amino-acid chain; its full sequence is (E)-benzylidenesuccinyl-CoA hydratase (256 aa).

E110 (nucleophile) is an active-site residue. E130 functions as the Proton acceptor in the catalytic mechanism.

It belongs to the enoyl-CoA hydratase/isomerase family. Homotrimer.

The catalysed reaction is (2S)-[(R)-hydroxy(phenyl)methyl]succinyl-CoA = (E)-2-benzylidenesuccinyl-CoA + H2O. It participates in xenobiotic degradation; toluene degradation. In terms of biological role, involved in an anaerobic toluene degradation pathway. Catalyzes the hydration of (E)-2-benzylidenesuccinyl-CoA to the corresponding alcohol intermediate, 2-(alpha-hydroxybenzyl)succinyl-CoA. Also accepts the N-acetylcysteamine (NAC) thioester of (E)-benzylidenesuccinate. In Thauera aromatica, this protein is (E)-benzylidenesuccinyl-CoA hydratase.